The sequence spans 426 residues: Meiotically up-regulated gene 170 protein (426 aa).

It belongs to the arrestin family.

It localises to the cytoplasm. The protein localises to the nucleus. Its function is as follows. Has a role in meiosis. The protein is Meiotically up-regulated gene 170 protein (mug170) of Schizosaccharomyces pombe (strain 972 / ATCC 24843) (Fission yeast).